The primary structure comprises 261 residues: UPF0328 protein ECU03_1620 (261 aa).

This sequence belongs to the UPF0328 family.

This is UPF0328 protein ECU03_1620 from Encephalitozoon cuniculi (strain GB-M1) (Microsporidian parasite).